A 263-amino-acid polypeptide reads, in one-letter code: MVRRLLALSRPLYWLYEKRLLREVKRGPMPRHLGLILDGNRRYARALGLSPTKGHEFGVQKAYEVLEWCLEMGIKTVTVWVFSTDNFKRPPEEVETLMNLFLREAERMAEDHRILEHQVRVRFIGRREGFSPEVVRAIERLERRTEGHRGMFLNIAMGYGGREEIVDAVKRLLLEAEARGLSPKEVAEGLTPEDIARHLYTAGLPDPDFIIRTSGEIRLSGFLLWQSAYSEFYFADVLWPEFRKIDFLRALRSYQARERRFGR.

Residue D38 is part of the active site. D38 contributes to the Mg(2+) binding site. Residues 39–42 (GNRR), H55, and 83–85 (STD) contribute to the substrate site. Catalysis depends on N86, which acts as the Proton acceptor. Residues F87, R89, R212, and 218–220 (RLS) each bind substrate. Residue E231 coordinates Mg(2+).

This sequence belongs to the UPP synthase family. In terms of assembly, homodimer. The cofactor is Mg(2+).

Functionally, catalyzes the condensation of isopentenyl diphosphate (IPP) with allylic pyrophosphates generating different type of terpenoids. The polypeptide is Isoprenyl transferase (Thermus thermophilus (strain ATCC 27634 / DSM 579 / HB8)).